The chain runs to 118 residues: Mating-type P-specific polypeptide Pc (118 aa).

Positions 29–97 form a DNA-binding region, HMG box; it reads KTTIYKNGFM…VRKQIAKLER (69 aa).

The protein localises to the nucleus. Functionally, mating type proteins are sequence specific DNA-binding proteins that act as master switches in yeast differentiation by controlling gene expression in a cell type-specific fashion. Required for conjugation and efficient meiosis. The sequence is that of Mating-type P-specific polypeptide Pc (matPc) from Schizosaccharomyces kambucha (Fission yeast).